The primary structure comprises 146 residues: Large ribosomal subunit protein uL15 (146 aa).

Positions 1–18 (MKLHELKPSEGSRKERNR) are enriched in basic and acidic residues. The disordered stretch occupies residues 1 to 50 (MKLHELKPSEGSRKERNRVGRGTGSGNGKTSGRGHKGQKARSGGGVRLGF). The span at 21–31 (RGTGSGNGKTS) shows a compositional bias: gly residues.

The protein belongs to the universal ribosomal protein uL15 family. In terms of assembly, part of the 50S ribosomal subunit.

Its function is as follows. Binds to the 23S rRNA. The polypeptide is Large ribosomal subunit protein uL15 (Listeria monocytogenes serotype 4b (strain CLIP80459)).